We begin with the raw amino-acid sequence, 669 residues long: MYLLIVFLPLLGSSVAGFFGRFLGSEGSAIMTTTCVSFSSILSLIAFYEVALGASACYLRIAPWISSEMFDASWGFLFDSLTVVMLIVVTFISSLVHLYSISYMSEDPHSPRFMCYLSIFTFFMLMLVTGDNFLQLFLGWEGVGLASYLLIHFWFTRLQADKAAIKAMLVNRVGDFGLALGILGCFTLFQTVDFSTIFACASVPRNSWIFCNMRLNAISLICILLFIGAVGKSAQIGLHTWLPDAMEGPTPVSALIHAATMVTAGVFMIARCSPLFEYSPTALIVITFAGAMTSFLAATTGILQNDLKRVIAYSTCSQLGYMIFACGISNYSVSVFHLMNHAFFKALLFLSAGSVIHAMSDEQDMRKMGGLASSFPLTYAMMLIGSLSLIGFPFLTGFYSKDVILELAYTKYTISGNFAFWLGSISVLFTSYYSFRLLFLTFLVPTNSFGRDISRCHDAPIPMAIPSILLALGSLFVGYLAKDMMIGLGWNFWANSLLVLPKNEILAESEFAAPTIIKLIPILFSTLGAFVAYNVNLVADQFQRAFQTSTFCNRLYSFFNKRWFFDQVLNDFLVRSFLRFGYEVSFEALDKGAIEILGPYGISYTFRRLAERISQLQSGFVYHYAFAMLLGLTLFVTFFCMWDSLSSWVDNRLSFILIVSSFYTKSSQE.

The next 14 helical transmembrane spans lie at 3–23 (LLIV…GRFL), 40–60 (SILS…CYLR), 76–96 (FLFD…SSLV), 113–133 (FMCY…GDNF), 136–156 (LFLG…FWFT), 217–237 (AISL…AQIG), 250–270 (TPVS…FMIA), 283–303 (LIVI…TGIL), 319–339 (LGYM…FHLM), 340–360 (NHAF…HAMS), 375–395 (FPLT…FPFL), 417–437 (NFAF…SFRL), 461–481 (IPMA…GYLA), and 619–639 (GFVY…VTFF).

This sequence belongs to the complex I subunit 5 family. In terms of assembly, complex I is composed of at least 49 different subunits.

The protein resides in the mitochondrion inner membrane. The enzyme catalyses a ubiquinone + NADH + 5 H(+)(in) = a ubiquinol + NAD(+) + 4 H(+)(out). Its function is as follows. Core subunit of the mitochondrial membrane respiratory chain NADH dehydrogenase (Complex I) that is believed to belong to the minimal assembly required for catalysis. Complex I functions in the transfer of electrons from NADH to the respiratory chain. The immediate electron acceptor for the enzyme is believed to be ubiquinone. This is NADH-ubiquinone oxidoreductase chain 5 (ND5) from Arabidopsis thaliana (Mouse-ear cress).